The sequence spans 301 residues: MNFAAALRWWRLSLPIADELEESLIWKLTDLGLCRLAVQHAPENSERTLLAWLPSSEWSESDRDQLMANLRPLAEPFGLKLANPTWCEVADEDWSLNWKQDWQPDPVGQRLLILPAWLDLPQEYADRFVVRLDPGSAFGTGSHPSTRLCLEALERNPPLGLRVADLGCGSGVLGFAALAFGARQVLAADTDCQAVCASRANTELNQLDLDRLRVVHGSVEALSAQLEGQTVDLLLCNILAPVIEVLAPSFDQLLSANGRGLLSGLLVKQAPRLQMVLEALGWRVNCLTEQGCWGLLDVSKR.

S-adenosyl-L-methionine-binding residues include Thr146, Gly167, Asp189, and Asn237.

This sequence belongs to the methyltransferase superfamily. PrmA family.

The protein resides in the cytoplasm. It catalyses the reaction L-lysyl-[protein] + 3 S-adenosyl-L-methionine = N(6),N(6),N(6)-trimethyl-L-lysyl-[protein] + 3 S-adenosyl-L-homocysteine + 3 H(+). Methylates ribosomal protein L11. This is Ribosomal protein L11 methyltransferase from Prochlorococcus marinus (strain MIT 9313).